A 530-amino-acid chain; its full sequence is MMIILFNCFFCASFREDGQHPTVSLGGVWGAAKELHEDKEFHQSDVHVFIIMGASGDLAKKKIYPTLWWLFRDGLLPEQTYFVGFARSALTVDAIRTSCMPYLKVTETESDRLSAFFSRNSYISGNYTAGGSFSELNAHIMSLPGASDANRLFYLALPPTIYHSVTENIKHFCMSAKGWNRVIVEKPFGHDLQSSEELSTHLSSLFTEDQIYRIDHYLGKEMVQNLMVLRFGNRIFGPIWNRDNVACVVLTFKEPFGTQGRGGYFDDFGIIRDVMQNHMLQMLCLVAMEKPASTNSDDVRDEKVKVLKCIVPASMSDVVLGQYVGDPEGEGDAKLGYLDDPTVPKGSTQATFATVVLYVHNERWDGVPFILRCGKALNERKAEVRLQFTDVPGDIFRNQCYRNELVVRVQPNEAIYAKMMSKKPGVYFTPEETELDLTYKSRYKDVKLPDAYERLILDVFCGSQMHFVASDELREAWRIFTPLLHQIEKEKPKPIPYKYGSRGPAEADELEKRVGFRYEGTYKWVNPHRL.

Residues 53-60 (GASGDLAK), Arg87, Tyr162, and Lys186 contribute to the NADP(+) site. D-glucose 6-phosphate is bound by residues Lys186, 216–220 (HYLGK), Glu254, and Asp273. Residue His278 is the Proton acceptor of the active site. Arg372 lines the NADP(+) pocket. D-glucose 6-phosphate is bound by residues Lys375 and Arg380. NADP(+) contacts are provided by Lys381, Arg385, and Arg408. Gln410 lines the D-glucose 6-phosphate pocket. Residues 416-418 (YAK), 436-438 (DLT), Arg502, Tyr518, and Trp524 each bind NADP(+).

It belongs to the glucose-6-phosphate dehydrogenase family.

The protein localises to the cytoplasm. The protein resides in the cytosol. The catalysed reaction is D-glucose 6-phosphate + NADP(+) = 6-phospho-D-glucono-1,5-lactone + NADPH + H(+). Its pathway is carbohydrate degradation; pentose phosphate pathway; D-ribulose 5-phosphate from D-glucose 6-phosphate (oxidative stage): step 1/3. In terms of biological role, cytosolic glucose-6-phosphate dehydrogenase that catalyzes the first and rate-limiting step of the oxidative branch within the pentose phosphate pathway/shunt, an alternative route to glycolysis for the dissimilation of carbohydrates and a major source of reducing power and metabolic intermediates for fatty acid and nucleic acid biosynthetic processes. The polypeptide is Glucose-6-phosphate 1-dehydrogenase (g6pd) (Takifugu rubripes (Japanese pufferfish)).